Reading from the N-terminus, the 329-residue chain is Cytosolic arginine sensor for mTORC1 subunit 1 (329 aa).

Phosphoserine is present on serine 14. 2 consecutive ACT domains span residues alanine 72–alanine 138 and glycine 260–glutamine 321. L-arginine contacts are provided by residues serine 111–valine 112, glycine 274, isoleucine 280–valine 281, and threonine 300–aspartate 304.

It belongs to the GATS family. Forms homodimers and heterodimers with CASTOR2. Interacts with the GATOR2 complex which is composed of MIOS, SEC13, SEH1L, WDR24 and WDR59; the interaction is negatively regulated by arginine. Interacts with TM4SF5; the interaction is positively regulated by leucine and is negatively regulated by arginine. In terms of processing, phosphorylation at Ser-14 by AKT1, promoting the interaction between CASTOR1 and RNF167. Post-translationally, ubiquitinated by RNF167 via 'Lys-29'-polyubiquitination, leading to its degradation, releasing the GATOR2 complex. Ubiquitination by RNF167 is promoted by phosphorylation at Ser-14 by AKT1.

Its subcellular location is the cytoplasm. It localises to the cytosol. In terms of biological role, functions as an intracellular arginine sensor within the amino acid-sensing branch of the TORC1 signaling pathway. As a homodimer or a heterodimer with CASTOR2, binds and inhibits the GATOR subcomplex GATOR2 and thereby mTORC1. Binding of arginine to CASTOR1 allosterically disrupts the interaction of CASTOR1-containing dimers with GATOR2 which can in turn activate mTORC1 and the TORC1 signaling pathway. This Pongo abelii (Sumatran orangutan) protein is Cytosolic arginine sensor for mTORC1 subunit 1.